The chain runs to 128 residues: Lutropin subunit beta (128 aa).

Disulfide bonds link cysteine 18/cysteine 66, cysteine 32/cysteine 81, cysteine 35/cysteine 119, cysteine 43/cysteine 97, cysteine 47/cysteine 99, and cysteine 102/cysteine 109. N-linked (GlcNAc...) asparagine glycosylation is present at asparagine 22.

The protein belongs to the glycoprotein hormones subunit beta family. In terms of assembly, heterodimer of a common alpha chain and a unique beta chain which confers biological specificity to thyrotropin, lutropin, follitropin and gonadotropin.

It localises to the secreted. In terms of biological role, promotes spermatogenesis and ovulation by stimulating the testes and ovaries to synthesize steroids. This is Lutropin subunit beta (LHB) from Struthio camelus (Common ostrich).